A 544-amino-acid chain; its full sequence is Dynein intermediate chain 1 (544 aa).

WD repeat units lie at residues 241-281 (KARS…YPVS), 289-330 (GHLE…RPSE), 342-387 (SQCI…QPSN), 402-441 (VMTSNSQNVFLEKNKDFALTSSFDWTVRLWQCSPSRNQHE), 461-501 (THKA…EAPV), and 506-544 (PDGKPLNKIAWQPEKRNLACGGLNGNVHIYKHLSPNLAN).

It belongs to the dynein intermediate chain family.

The protein resides in the cytoplasm. In terms of biological role, has a role in meiotic nuclear divsion where it promotes the movement of 'horsetails'. This chain is Dynein intermediate chain 1 (dic1), found in Schizosaccharomyces pombe (strain 972 / ATCC 24843) (Fission yeast).